Reading from the N-terminus, the 201-residue chain is Single-stranded DNA-binding protein, mitochondrial (201 aa).

In terms of domain architecture, SSB spans 71–184 (VHRAIICGKV…RDGKIRMIKY (114 aa)).

Its subcellular location is the mitochondrion. Binds to ss-DNA. This Arabidopsis thaliana (Mouse-ear cress) protein is Single-stranded DNA-binding protein, mitochondrial.